The chain runs to 132 residues: MIVGLGTDIVEIERIEQKVPQAGDHEALAKCRLAKRVLTESEMAIFVASSKPGRYLAKRFAAKEAAAKALGTGIGRGVSFQHIEISNDANGAPQVNFSGGAAERLALLSGVRGHLSIADEKHYATATVILES.

Residues aspartate 8 and glutamate 64 each contribute to the Mg(2+) site.

The protein belongs to the P-Pant transferase superfamily. AcpS family. Mg(2+) serves as cofactor.

The protein localises to the cytoplasm. The catalysed reaction is apo-[ACP] + CoA = holo-[ACP] + adenosine 3',5'-bisphosphate + H(+). Transfers the 4'-phosphopantetheine moiety from coenzyme A to a Ser of acyl-carrier-protein. The chain is Holo-[acyl-carrier-protein] synthase from Shewanella sediminis (strain HAW-EB3).